The following is a 159-amino-acid chain: MNITIIAVGKLKEKYLKAAVEEYSKRLSRYCRLNIIEVQDEKTPDNASSSEQDIIKEKEGRRILKYINDNMYVVALDLKGSMMGSEEFSKFVGNLGLSGKSNIAFIIGGSLGISSEILKRADYKLCFSKMTFPHQLFRIMLLEQIYRGFRIMKGEPYHK.

S-adenosyl-L-methionine-binding positions include Leu-76, Gly-108, and 127–132; that span reads FSKMTF.

This sequence belongs to the RNA methyltransferase RlmH family. Homodimer.

The protein localises to the cytoplasm. The enzyme catalyses pseudouridine(1915) in 23S rRNA + S-adenosyl-L-methionine = N(3)-methylpseudouridine(1915) in 23S rRNA + S-adenosyl-L-homocysteine + H(+). Its function is as follows. Specifically methylates the pseudouridine at position 1915 (m3Psi1915) in 23S rRNA. The polypeptide is Ribosomal RNA large subunit methyltransferase H (Clostridium kluyveri (strain NBRC 12016)).